A 587-amino-acid chain; its full sequence is Glutathione hydrolase proenzyme (587 aa).

The signal sequence occupies residues 1–28; that stretch reads MKRTWNVCLTALLSVLLVAGSVPFHAEA. Positions 29-35 are excised as a propeptide; it reads KKPPKSY. Arg-113 contacts L-glutamate. The active-site Nucleophile is the Thr-403. L-glutamate contacts are provided by residues Thr-421, Glu-423, Glu-442, Asp-445, 464–465, and 485–486; these read SS and GG.

It belongs to the gamma-glutamyltransferase family. In terms of assembly, this enzyme consists of two polypeptide chains, which are synthesized in precursor form from a single polypeptide. In terms of processing, cleaved by autocatalysis into a large and small subunit.

It is found in the secreted. It carries out the reaction an N-terminal (5-L-glutamyl)-[peptide] + an alpha-amino acid = 5-L-glutamyl amino acid + an N-terminal L-alpha-aminoacyl-[peptide]. The catalysed reaction is glutathione + H2O = L-cysteinylglycine + L-glutamate. It catalyses the reaction an S-substituted glutathione + H2O = an S-substituted L-cysteinylglycine + L-glutamate. Its pathway is sulfur metabolism; glutathione metabolism. Inhibited by glucose. Its function is as follows. Cleaves the gamma-glutamyl bond of extracellular glutathione (gamma-Glu-Cys-Gly), glutathione conjugates, and other gamma-glutamyl compounds. The metabolism of glutathione releases free glutamate and the dipeptide cysteinyl-glycine, which is hydrolyzed to cysteine and glycine by dipeptidases. Uses glutamine as a gamma-glutamyl donor and acceptor for gamma-polyglutamic acid synthesis. Dipeptides are better gamma-glutamyl acceptors than free amino acids. This chain is Glutathione hydrolase proenzyme (ggt), found in Bacillus subtilis subsp. natto.